The following is a 264-amino-acid chain: Small ribosomal subunit protein eS1 (264 aa).

Lysine 34 bears the N6-acetyllysine; alternate mark. Lysine 34 participates in a covalent cross-link: Glycyl lysine isopeptide (Lys-Gly) (interchain with G-Cter in SUMO2); alternate. N6-acetyllysine is present on lysine 56. ADP-ribosyltyrosine is present on tyrosine 155. A disordered region spans residues 233–264; that stretch reads GEGGSSGKAAGDETGAKVERADGYEPPVQESV. The residue at position 237 (serine 237) is a Phosphoserine. Residues 242–255 show a composition bias toward basic and acidic residues; the sequence is AGDETGAKVERADG. Position 249 is an N6-acetyllysine; alternate (lysine 249). Lysine 249 is covalently cross-linked (Glycyl lysine isopeptide (Lys-Gly) (interchain with G-Cter in SUMO2); alternate). Phosphotyrosine is present on tyrosine 256. Serine 263 carries the phosphoserine modification.

This sequence belongs to the eukaryotic ribosomal protein eS1 family. Component of the small ribosomal subunit. Mature ribosomes consist of a small (40S) and a large (60S) subunit. The 40S subunit contains about 33 different proteins and 1 molecule of RNA (18S). The 60S subunit contains about 49 different proteins and 3 molecules of RNA (28S, 5.8S and 5S). Identified in a IGF2BP1-dependent mRNP granule complex containing untranslated mRNAs. Binds with high affinity to IPO4. Interacts with DDIT3. Part of the small subunit (SSU) processome, composed of more than 70 proteins and the RNA chaperone small nucleolar RNA (snoRNA) U3. ADP-ribosylated at Tyr-155 by PARP1 in presence of HPF1.

It is found in the cytoplasm. It localises to the nucleus. The protein localises to the nucleolus. Functionally, component of the small ribosomal subunit. The ribosome is a large ribonucleoprotein complex responsible for the synthesis of proteins in the cell. Part of the small subunit (SSU) processome, first precursor of the small eukaryotic ribosomal subunit. During the assembly of the SSU processome in the nucleolus, many ribosome biogenesis factors, an RNA chaperone and ribosomal proteins associate with the nascent pre-rRNA and work in concert to generate RNA folding, modifications, rearrangements and cleavage as well as targeted degradation of pre-ribosomal RNA by the RNA exosome. May play a role during erythropoiesis through regulation of transcription factor DDIT3. The polypeptide is Small ribosomal subunit protein eS1 (Rps3a) (Mus musculus (Mouse)).